Here is a 96-residue protein sequence, read N- to C-terminus: Co-chaperonin GroES (96 aa).

This sequence belongs to the GroES chaperonin family. Heptamer of 7 subunits arranged in a ring. Interacts with the chaperonin GroEL.

It localises to the cytoplasm. Functionally, together with the chaperonin GroEL, plays an essential role in assisting protein folding. The GroEL-GroES system forms a nano-cage that allows encapsulation of the non-native substrate proteins and provides a physical environment optimized to promote and accelerate protein folding. GroES binds to the apical surface of the GroEL ring, thereby capping the opening of the GroEL channel. The polypeptide is Co-chaperonin GroES (Leptospira interrogans serogroup Icterohaemorrhagiae serovar copenhageni (strain Fiocruz L1-130)).